A 368-amino-acid chain; its full sequence is Histidinol-phosphate aminotransferase (368 aa).

Lys226 bears the N6-(pyridoxal phosphate)lysine mark.

The protein belongs to the class-II pyridoxal-phosphate-dependent aminotransferase family. Histidinol-phosphate aminotransferase subfamily. In terms of assembly, homodimer. Pyridoxal 5'-phosphate serves as cofactor.

The enzyme catalyses L-histidinol phosphate + 2-oxoglutarate = 3-(imidazol-4-yl)-2-oxopropyl phosphate + L-glutamate. The protein operates within amino-acid biosynthesis; L-histidine biosynthesis; L-histidine from 5-phospho-alpha-D-ribose 1-diphosphate: step 7/9. The sequence is that of Histidinol-phosphate aminotransferase from Colwellia psychrerythraea (strain 34H / ATCC BAA-681) (Vibrio psychroerythus).